We begin with the raw amino-acid sequence, 197 residues long: NADH-quinone oxidoreductase subunit C (197 aa).

It belongs to the complex I 30 kDa subunit family. NDH-1 is composed of 14 different subunits. Subunits NuoB, C, D, E, F, and G constitute the peripheral sector of the complex.

Its subcellular location is the cell inner membrane. The enzyme catalyses a quinone + NADH + 5 H(+)(in) = a quinol + NAD(+) + 4 H(+)(out). Functionally, NDH-1 shuttles electrons from NADH, via FMN and iron-sulfur (Fe-S) centers, to quinones in the respiratory chain. The immediate electron acceptor for the enzyme in this species is believed to be ubiquinone. Couples the redox reaction to proton translocation (for every two electrons transferred, four hydrogen ions are translocated across the cytoplasmic membrane), and thus conserves the redox energy in a proton gradient. The polypeptide is NADH-quinone oxidoreductase subunit C (Caulobacter vibrioides (strain ATCC 19089 / CIP 103742 / CB 15) (Caulobacter crescentus)).